Reading from the N-terminus, the 368-residue chain is Glutamate 5-kinase (368 aa).

ATP is bound at residue Lys12. The substrate site is built by Ser52, Asp139, and Asn151. ATP is bound by residues Ser171–Asp172 and Thr213–Lys219. The 78-residue stretch at Lys277–Ile354 folds into the PUA domain.

This sequence belongs to the glutamate 5-kinase family.

The protein resides in the cytoplasm. It catalyses the reaction L-glutamate + ATP = L-glutamyl 5-phosphate + ADP. The protein operates within amino-acid biosynthesis; L-proline biosynthesis; L-glutamate 5-semialdehyde from L-glutamate: step 1/2. Catalyzes the transfer of a phosphate group to glutamate to form L-glutamate 5-phosphate. The sequence is that of Glutamate 5-kinase from Pelagibacter ubique (strain HTCC1062).